The following is a 174-amino-acid chain: Serine protease 2 (174 aa).

C15 and C36 form a disulfide bridge. Active-site charge relay system residues include H35, D65, and S147. A disulfide bond links C141 and C168.

This sequence belongs to the peptidase S1 family.

The protein localises to the secreted. Broad substrate specificity. In Streptomyces fradiae (Streptomyces roseoflavus), this protein is Serine protease 2.